We begin with the raw amino-acid sequence, 205 residues long: Glycerol-3-phosphate acyltransferase (205 aa).

The Periplasmic portion of the chain corresponds to 1 to 3 (MSA). A helical transmembrane segment spans residues 4–24 (IAPGMILFAYLCGSISSAILV). Residues 25-52 (CRIAGLPDPRESGSGNPGATNVLRIGGK) are Cytoplasmic-facing. The helical transmembrane segment at 53 to 73 (GAAVAVLIFDILKGMLPVWGA) threads the bilayer. At 74–80 (YALGITP) the chain is on the periplasmic side. The helical transmembrane segment at 81-101 (FWLGLIAIAACLGHIWPVFFG) threads the bilayer. The Cytoplasmic portion of the chain corresponds to 102-111 (FKGGKGVATA). The chain crosses the membrane as a helical span at residues 112–132 (FGAIAPIGWDLTGVIAGTWLL). Residues 133–137 (TVLLS) lie on the Periplasmic side of the membrane. Residues 138–158 (GYSSLGAIVSALIAPFYVWWF) traverse the membrane as a helical segment. The Cytoplasmic portion of the chain corresponds to 159–205 (KPQFTFPVSMLSCLILLRHHDNIQRLWRRQETKIWTKLKKKREKESK).

This sequence belongs to the PlsY family. Probably interacts with PlsX.

The protein resides in the cell inner membrane. It carries out the reaction sn-glycerol 3-phosphate + an acyl-CoA = a 1-acyl-sn-glycero-3-phosphate + CoA. The enzyme catalyses a fatty acyl-[ACP] + sn-glycerol 3-phosphate = a 1-acyl-sn-glycero-3-phosphate + holo-[ACP]. The protein operates within lipid metabolism; phospholipid metabolism. Its function is as follows. Catalyzes the transfer of an acyl group from acyl-ACP to glycerol-3-phosphate (G3P) to form lysophosphatidic acid (LPA). This enzyme can also utilize acyl-CoA as fatty acyl donor, but not acyl-PO(4). The polypeptide is Glycerol-3-phosphate acyltransferase (Salmonella arizonae (strain ATCC BAA-731 / CDC346-86 / RSK2980)).